Consider the following 153-residue polypeptide: SsrA-binding protein (153 aa).

Basic and acidic residues predominate over residues 133 to 143; that stretch reads ADLKERDDKRQ. Positions 133–153 are disordered; the sequence is ADLKERDDKRQMQQALKQQQY. Residues 144–153 show a composition bias toward low complexity; the sequence is MQQALKQQQY.

It belongs to the SmpB family.

The protein resides in the cytoplasm. Functionally, required for rescue of stalled ribosomes mediated by trans-translation. Binds to transfer-messenger RNA (tmRNA), required for stable association of tmRNA with ribosomes. tmRNA and SmpB together mimic tRNA shape, replacing the anticodon stem-loop with SmpB. tmRNA is encoded by the ssrA gene; the 2 termini fold to resemble tRNA(Ala) and it encodes a 'tag peptide', a short internal open reading frame. During trans-translation Ala-aminoacylated tmRNA acts like a tRNA, entering the A-site of stalled ribosomes, displacing the stalled mRNA. The ribosome then switches to translate the ORF on the tmRNA; the nascent peptide is terminated with the 'tag peptide' encoded by the tmRNA and targeted for degradation. The ribosome is freed to recommence translation, which seems to be the essential function of trans-translation. In Protochlamydia amoebophila (strain UWE25), this protein is SsrA-binding protein.